We begin with the raw amino-acid sequence, 310 residues long: tRNA dimethylallyltransferase (310 aa).

Position 24-31 (24-31 (GPTASGKT)) interacts with ATP. 26 to 31 (TASGKT) contacts substrate. The segment at 49-52 (DSRQ) is interaction with substrate tRNA.

This sequence belongs to the IPP transferase family. Monomer. Requires Mg(2+) as cofactor.

The enzyme catalyses adenosine(37) in tRNA + dimethylallyl diphosphate = N(6)-dimethylallyladenosine(37) in tRNA + diphosphate. Catalyzes the transfer of a dimethylallyl group onto the adenine at position 37 in tRNAs that read codons beginning with uridine, leading to the formation of N6-(dimethylallyl)adenosine (i(6)A). The chain is tRNA dimethylallyltransferase from Synechococcus sp. (strain WH7803).